A 119-amino-acid chain; its full sequence is Large ribosomal subunit protein bL20 (119 aa).

The protein belongs to the bacterial ribosomal protein bL20 family.

Functionally, binds directly to 23S ribosomal RNA and is necessary for the in vitro assembly process of the 50S ribosomal subunit. It is not involved in the protein synthesizing functions of that subunit. The chain is Large ribosomal subunit protein bL20 from Mycoplasma capricolum subsp. capricolum (strain California kid / ATCC 27343 / NCTC 10154).